Consider the following 155-residue polypeptide: 2-C-methyl-D-erythritol 2,4-cyclodiphosphate synthase (155 aa).

Aspartate 8 and histidine 10 together coordinate a divalent metal cation. Residues 8 to 10 (DVH) and 34 to 35 (HS) contribute to the 4-CDP-2-C-methyl-D-erythritol 2-phosphate site. Residue histidine 42 coordinates a divalent metal cation. 4-CDP-2-C-methyl-D-erythritol 2-phosphate-binding positions include 56–58 (DIG), 61–65 (FPDSD), 100–106 (AQKPKML), 132–135 (TTEE), phenylalanine 139, and lysine 142.

Belongs to the IspF family. Homotrimer. A divalent metal cation is required as a cofactor.

It carries out the reaction 4-CDP-2-C-methyl-D-erythritol 2-phosphate = 2-C-methyl-D-erythritol 2,4-cyclic diphosphate + CMP. The protein operates within isoprenoid biosynthesis; isopentenyl diphosphate biosynthesis via DXP pathway; isopentenyl diphosphate from 1-deoxy-D-xylulose 5-phosphate: step 4/6. In terms of biological role, involved in the biosynthesis of isopentenyl diphosphate (IPP) and dimethylallyl diphosphate (DMAPP), two major building blocks of isoprenoid compounds. Catalyzes the conversion of 4-diphosphocytidyl-2-C-methyl-D-erythritol 2-phosphate (CDP-ME2P) to 2-C-methyl-D-erythritol 2,4-cyclodiphosphate (ME-CPP) with a corresponding release of cytidine 5-monophosphate (CMP). This Clostridium botulinum (strain Kyoto / Type A2) protein is 2-C-methyl-D-erythritol 2,4-cyclodiphosphate synthase.